Reading from the N-terminus, the 98-residue chain is Aspartyl/glutamyl-tRNA(Asn/Gln) amidotransferase subunit C (98 aa).

It belongs to the GatC family. Heterotrimer of A, B and C subunits.

The catalysed reaction is L-glutamyl-tRNA(Gln) + L-glutamine + ATP + H2O = L-glutaminyl-tRNA(Gln) + L-glutamate + ADP + phosphate + H(+). It carries out the reaction L-aspartyl-tRNA(Asn) + L-glutamine + ATP + H2O = L-asparaginyl-tRNA(Asn) + L-glutamate + ADP + phosphate + 2 H(+). Allows the formation of correctly charged Asn-tRNA(Asn) or Gln-tRNA(Gln) through the transamidation of misacylated Asp-tRNA(Asn) or Glu-tRNA(Gln) in organisms which lack either or both of asparaginyl-tRNA or glutaminyl-tRNA synthetases. The reaction takes place in the presence of glutamine and ATP through an activated phospho-Asp-tRNA(Asn) or phospho-Glu-tRNA(Gln). This is Aspartyl/glutamyl-tRNA(Asn/Gln) amidotransferase subunit C from Acidothermus cellulolyticus (strain ATCC 43068 / DSM 8971 / 11B).